Reading from the N-terminus, the 24-residue chain is Ranatuerin-4 (24 aa).

A disulfide bridge connects residues Cys-18 and Cys-24.

The protein belongs to the frog skin active peptide (FSAP) family. Ranatuerin subfamily. In terms of tissue distribution, expressed by the skin glands.

The protein resides in the secreted. Antibacterial activity against Gram-positive bacterium S.aureus (MIC=55 uM). Shows no detectable hemolytic activity towards human erythrocytes. The polypeptide is Ranatuerin-4 (Aquarana catesbeiana (American bullfrog)).